We begin with the raw amino-acid sequence, 47 residues long: Large ribosomal subunit protein eL40 (47 aa).

The protein belongs to the eukaryotic ribosomal protein eL40 family.

This chain is Large ribosomal subunit protein eL40, found in Methanococcus vannielii (strain ATCC 35089 / DSM 1224 / JCM 13029 / OCM 148 / SB).